Consider the following 352-residue polypeptide: rRNA 2'-O-methyltransferase fibrillarin (352 aa).

The disordered stretch occupies residues 1 to 115 (MGRPEFNRGG…GGAGGMRGGK (115 aa)). Arginine 8, arginine 16, arginine 19, arginine 23, arginine 27, arginine 35, arginine 43, arginine 51, arginine 55, arginine 58, arginine 63, arginine 67, arginine 70, arginine 75, arginine 81, arginine 85, arginine 91, arginine 95, arginine 98, arginine 102, arginine 105, and arginine 112 each carry asymmetric dimethylarginine. The segment covering 8 to 18 (RGGGGGGFRGG) has biased composition (gly residues). A compositionally biased stretch (gly residues) spans 26 to 59 (SRGGFGGGGRGGYGGGDRGSFGGGDRGGFRGGRG). Residues 66–113 (FRGGRGGGDRGGFGGRGSPRGGFGGRGSPRGGRGSPRGGRGGAGGMRG) are compositionally biased toward gly residues. S-adenosyl-L-methionine contacts are provided by residues 203 to 204 (TT), 222 to 223 (EF), 247 to 248 (DA), and 267 to 270 (DVAQ).

This sequence belongs to the methyltransferase superfamily. Fibrillarin family. Component of box C/D small nucleolar ribonucleoprotein (snoRNP) particles. It is associated with the U3, U8 and U13 small nuclear RNAs. In terms of processing, by homology to other fibrillarins, some or all of the N-terminal domain arginines are modified to asymmetric dimethylarginine (DMA).

It is found in the nucleus. The protein localises to the nucleolus. It localises to the nucleoplasm. The catalysed reaction is L-glutaminyl-[histone H2A] + S-adenosyl-L-methionine = N(5)-methyl-L-glutaminyl-[histone H2A] + S-adenosyl-L-homocysteine + H(+). S-adenosyl-L-methionine-dependent methyltransferase that has the ability to methylate both RNAs and proteins. Involved in pre-rRNA processing. Utilizes the methyl donor S-adenosyl-L-methionine to catalyze the site-specific 2'-hydroxyl methylation of ribose moieties in pre-ribosomal RNA. Site specificity is provided by a guide RNA that base pairs with the substrate. Methylation occurs at a characteristic distance from the sequence involved in base pairing with the guide RNA. Also acts as a protein methyltransferase by mediating methylation of 'Gln-105' of histone H2A (H2AQ105me), a modification that impairs binding of the FACT complex and is specifically present at 35S ribosomal DNA locus. Plays a role in modulation of nucleolus size most likely through regulating the ribosomal RNA (rRNA) pool. This Caenorhabditis elegans protein is rRNA 2'-O-methyltransferase fibrillarin.